Here is a 190-residue protein sequence, read N- to C-terminus: Shikimate kinase (190 aa).

Residue 13-18 (GAGKTT) coordinates ATP. Mg(2+) is bound at residue Thr17. Residues Asp35, Arg59, and Gly81 each coordinate substrate. Arg119 provides a ligand contact to ATP. Residue Arg138 participates in substrate binding.

Belongs to the shikimate kinase family. In terms of assembly, monomer. Mg(2+) serves as cofactor.

It is found in the cytoplasm. It carries out the reaction shikimate + ATP = 3-phosphoshikimate + ADP + H(+). The protein operates within metabolic intermediate biosynthesis; chorismate biosynthesis; chorismate from D-erythrose 4-phosphate and phosphoenolpyruvate: step 5/7. Its function is as follows. Catalyzes the specific phosphorylation of the 3-hydroxyl group of shikimic acid using ATP as a cosubstrate. The sequence is that of Shikimate kinase from Ralstonia nicotianae (strain ATCC BAA-1114 / GMI1000) (Ralstonia solanacearum).